A 122-amino-acid chain; its full sequence is Large ribosomal subunit protein uL18 (122 aa).

It belongs to the universal ribosomal protein uL18 family. In terms of assembly, part of the 50S ribosomal subunit; part of the 5S rRNA/L5/L18/L25 subcomplex. Contacts the 5S and 23S rRNAs.

In terms of biological role, this is one of the proteins that bind and probably mediate the attachment of the 5S RNA into the large ribosomal subunit, where it forms part of the central protuberance. The sequence is that of Large ribosomal subunit protein uL18 from Prochlorococcus marinus (strain MIT 9515).